Here is a 402-residue protein sequence, read N- to C-terminus: Omega-3 fatty acid desaturase fat-1 (402 aa).

4 consecutive transmembrane segments (helical) span residues 79-99 (LVQD…FEYF), 101-121 (LFGY…LFVV), 235-255 (CVIS…IAGS), and 260-280 (FWYY…VTYL).

Belongs to the fatty acid desaturase type 1 family.

It localises to the membrane. It carries out the reaction (9Z,12Z)-octadecadienoyl-CoA + 2 Fe(II)-[cytochrome b5] + O2 + 2 H(+) = (9Z,12Z,15Z)-octadecatrienoyl-CoA + 2 Fe(III)-[cytochrome b5] + 2 H2O. It catalyses the reaction (8Z,11Z,14Z)-eicosatrienoyl-CoA + 2 Fe(II)-[cytochrome b5] + O2 + 2 H(+) = (8Z,11Z,14Z,17Z)-eicosatetraenoyl-CoA + 2 Fe(III)-[cytochrome b5] + 2 H2O. The enzyme catalyses (5Z,8Z,11Z,14Z)-eicosatetraenoyl-CoA + 2 Fe(II)-[cytochrome b5] + O2 + 2 H(+) = (5Z,8Z,11Z,14Z,17Z)-eicosapentaenoyl-CoA + 2 Fe(III)-[cytochrome b5] + 2 H2O. The catalysed reaction is (7Z,10Z,13Z,16Z)-docosatetraenoyl-CoA + 2 Fe(II)-[cytochrome b5] + O2 + 2 H(+) = (7Z,10Z,13Z,16Z,19Z)-docosapentaenoyl-CoA + 2 Fe(III)-[cytochrome b5] + 2 H2O. It carries out the reaction (6Z,9Z,12Z)-octadecatrienoyl-CoA + 2 Fe(II)-[cytochrome b5] + O2 + 2 H(+) = (6Z,9Z,12Z,15Z)-octadecatetraenoyl-CoA + 2 Fe(III)-[cytochrome b5] + 2 H2O. The protein operates within lipid metabolism; polyunsaturated fatty acid biosynthesis. Omega-3 fatty acid desaturase that recognizes a range of 18- and 20-carbon omega-6 substrates. Introduces a double bond in the fatty acid chain three carbons away from terminal methyl group to biosynthesize n-3 (omega-3) polyunsaturated fatty acids (PUFAs) endogenously (PUFAs are essential for membrane structure and many cellular and physiological processes). Acts on a number of substrates like linoleoyl-CoA ((9Z,12Z)-octadecadienoyl-CoA, 18:2n-6), dihomo-gamma-linolenoyl-CoA ((8Z,11Z,14Z)-eicosatrienoyl-CoA, 20:3n-6), and arachidonoyl-CoA ((5Z,8Z,11Z,14Z)-eicosatetraenoyl-CoA, 20:4n-6), to generate alpha-linolenoyl-CoA ((9Z,12Z,15Z)-octadecatrienoyl-CoA, 18:3n-3), (8Z,11Z,14Z,17Z)-eicosatetraenoyl-CoA (20:4n-3) and (5Z,8Z,11Z,14Z,17Z)-eicosapentaenoyl-CoA (20:5n-3) respectively. Unlike plants, Caenorhabditis elegans desaturases seem to use fatty acyl-CoAs as substrates. The chain is Omega-3 fatty acid desaturase fat-1 (fat-1) from Caenorhabditis elegans.